We begin with the raw amino-acid sequence, 388 residues long: Succinate--CoA ligase [ADP-forming] subunit beta (388 aa).

Residues Lys-9 to Glu-244 enclose the ATP-grasp domain. Residues Lys-46, Gly-53 to Gly-55, Glu-99, Ala-102, and Glu-107 contribute to the ATP site. The Mg(2+) site is built by Asn-199 and Asp-213. Residues Asn-264 and Gly-321–Met-323 each bind substrate.

It belongs to the succinate/malate CoA ligase beta subunit family. As to quaternary structure, heterotetramer of two alpha and two beta subunits. The cofactor is Mg(2+).

It catalyses the reaction succinate + ATP + CoA = succinyl-CoA + ADP + phosphate. The enzyme catalyses GTP + succinate + CoA = succinyl-CoA + GDP + phosphate. Its pathway is carbohydrate metabolism; tricarboxylic acid cycle; succinate from succinyl-CoA (ligase route): step 1/1. In terms of biological role, succinyl-CoA synthetase functions in the citric acid cycle (TCA), coupling the hydrolysis of succinyl-CoA to the synthesis of either ATP or GTP and thus represents the only step of substrate-level phosphorylation in the TCA. The beta subunit provides nucleotide specificity of the enzyme and binds the substrate succinate, while the binding sites for coenzyme A and phosphate are found in the alpha subunit. The sequence is that of Succinate--CoA ligase [ADP-forming] subunit beta from Burkholderia vietnamiensis (strain G4 / LMG 22486) (Burkholderia cepacia (strain R1808)).